Consider the following 301-residue polypeptide: Sulfate adenylyltransferase subunit 2 2 (301 aa).

This sequence belongs to the PAPS reductase family. CysD subfamily. Heterodimer composed of CysD, the smaller subunit, and CysN.

The enzyme catalyses sulfate + ATP + H(+) = adenosine 5'-phosphosulfate + diphosphate. It participates in sulfur metabolism; hydrogen sulfide biosynthesis; sulfite from sulfate: step 1/3. Its function is as follows. With CysN forms the ATP sulfurylase (ATPS) that catalyzes the adenylation of sulfate producing adenosine 5'-phosphosulfate (APS) and diphosphate, the first enzymatic step in sulfur assimilation pathway. APS synthesis involves the formation of a high-energy phosphoric-sulfuric acid anhydride bond driven by GTP hydrolysis by CysN coupled to ATP hydrolysis by CysD. This chain is Sulfate adenylyltransferase subunit 2 2, found in Shewanella sediminis (strain HAW-EB3).